Reading from the N-terminus, the 439-residue chain is Dihydroorotase (439 aa).

Zn(2+) is bound by residues histidine 73 and histidine 75. Residues 75–77 and asparagine 107 each bind substrate; that span reads HLR. Residues aspartate 165, histidine 192, and histidine 245 each contribute to the Zn(2+) site. Asparagine 291 is a substrate binding site. Residue aspartate 318 participates in Zn(2+) binding. Aspartate 318 is an active-site residue. Substrate is bound at residue histidine 322.

The protein belongs to the metallo-dependent hydrolases superfamily. DHOase family. Class I DHOase subfamily. It depends on Zn(2+) as a cofactor.

The catalysed reaction is (S)-dihydroorotate + H2O = N-carbamoyl-L-aspartate + H(+). Its pathway is pyrimidine metabolism; UMP biosynthesis via de novo pathway; (S)-dihydroorotate from bicarbonate: step 3/3. Its function is as follows. Catalyzes the reversible cyclization of carbamoyl aspartate to dihydroorotate. This is Dihydroorotase from Syntrophobacter fumaroxidans (strain DSM 10017 / MPOB).